A 194-amino-acid chain; its full sequence is dITP/XTP pyrophosphatase (194 aa).

8-13 (TNNPHK) serves as a coordination point for substrate. Aspartate 69 functions as the Proton acceptor in the catalytic mechanism. Aspartate 69 is a binding site for Mg(2+). Substrate-binding positions include threonine 70, 150–153 (FGYD), lysine 173, and 178–179 (HR).

Belongs to the HAM1 NTPase family. As to quaternary structure, homodimer. Requires Mg(2+) as cofactor.

It catalyses the reaction XTP + H2O = XMP + diphosphate + H(+). It carries out the reaction dITP + H2O = dIMP + diphosphate + H(+). The enzyme catalyses ITP + H2O = IMP + diphosphate + H(+). Functionally, pyrophosphatase that catalyzes the hydrolysis of nucleoside triphosphates to their monophosphate derivatives, with a high preference for the non-canonical purine nucleotides XTP (xanthosine triphosphate), dITP (deoxyinosine triphosphate) and ITP. Seems to function as a house-cleaning enzyme that removes non-canonical purine nucleotides from the nucleotide pool, thus preventing their incorporation into DNA/RNA and avoiding chromosomal lesions. In Porphyromonas gingivalis (strain ATCC BAA-308 / W83), this protein is dITP/XTP pyrophosphatase.